Consider the following 189-residue polypeptide: Elongation factor P (189 aa).

It belongs to the elongation factor P family.

Its subcellular location is the cytoplasm. It participates in protein biosynthesis; polypeptide chain elongation. Involved in peptide bond synthesis. Stimulates efficient translation and peptide-bond synthesis on native or reconstituted 70S ribosomes in vitro. Probably functions indirectly by altering the affinity of the ribosome for aminoacyl-tRNA, thus increasing their reactivity as acceptors for peptidyl transferase. The chain is Elongation factor P from Pseudomonas putida (strain ATCC 700007 / DSM 6899 / JCM 31910 / BCRC 17059 / LMG 24140 / F1).